Here is a 442-residue protein sequence, read N- to C-terminus: Trigger factor (442 aa).

One can recognise a PPIase FKBP-type domain in the interval 162-247 (GDRMTFDFEG…VKAIESRELP (86 aa)).

This sequence belongs to the FKBP-type PPIase family. Tig subfamily.

Its subcellular location is the cytoplasm. It carries out the reaction [protein]-peptidylproline (omega=180) = [protein]-peptidylproline (omega=0). In terms of biological role, involved in protein export. Acts as a chaperone by maintaining the newly synthesized protein in an open conformation. Functions as a peptidyl-prolyl cis-trans isomerase. The chain is Trigger factor from Magnetococcus marinus (strain ATCC BAA-1437 / JCM 17883 / MC-1).